The chain runs to 334 residues: Methionine adenosyltransferase 2 subunit beta (334 aa).

NADP(+) contacts are provided by residues 37-40 (TGLL), 60-62 (FRR), 71-72 (NL), cysteine 93, arginine 97, tyrosine 159, and leucine 185. Threonine 309 carries the phosphothreonine modification. Residues 319–334 (LWPFLIDKRWRQTVFH) are required for interaction with MAT2A.

Belongs to the dTDP-4-dehydrorhamnose reductase family. MAT2B subfamily. As to quaternary structure, heterotrimer; composed of a catalytic MAT2A homodimer that binds one regulatory MAT2B chain. Heterohexamer; composed of a central, catalytic MAT2A homotetramer flanked on either side by a regulatory MAT2B chain. NADP binding increases the affinity for MAT2A.

Its pathway is amino-acid biosynthesis; S-adenosyl-L-methionine biosynthesis; S-adenosyl-L-methionine from L-methionine: step 1/1. Its function is as follows. Regulatory subunit of S-adenosylmethionine synthetase 2, an enzyme that catalyzes the formation of S-adenosylmethionine from methionine and ATP. Regulates MAT2A catalytic activity by changing its kinetic properties, increasing its affinity for L-methionine. Can bind NADP (in vitro). The polypeptide is Methionine adenosyltransferase 2 subunit beta (MAT2B) (Bos taurus (Bovine)).